A 982-amino-acid chain; its full sequence is Filament-like plant protein 4 (982 aa).

2 coiled-coil regions span residues 39 to 83 (DQYT…VAKE) and 125 to 291 (EDRA…RKKL). The tract at residues 311-333 (DHRQDHRQRRSPVRPSSPLMSPM) is disordered. Low complexity predominate over residues 323–333 (VRPSSPLMSPM). Residues 345-401 (DNMQKFHKENDLLTERLLAMEEETKMLKEALAKRNSELQVSRNLCAKTANRLQTLEA) are a coiled coil. Over residues 423-433 (QNASNPPSMAS) the composition is skewed to polar residues. Disordered stretches follow at residues 423–466 (QNAS…AKIK) and 687–711 (QKDS…PDDC). Residues 452–475 (ELSQSNKDKANAKIKKTESANQLE) adopt a coiled-coil conformation. Basic and acidic residues predominate over residues 457–466 (NKDKANAKIK). A compositionally biased stretch (polar residues) spans 693–705 (EHYQNGCSQSSDS). Residues 722–885 (ATCKFTTEEF…AECQETILLL (164 aa)) are a coiled coil. Polar residues-rich tracts occupy residues 896 to 910 (TEQV…QQAL) and 918 to 943 (ATST…NTMK). The interval 896-982 (TEQVASSPSQ…FSRFFSTKAK (87 aa)) is disordered.

Belongs to the FPP family. As to quaternary structure, interacts with WPP/MAF proteins.

This chain is Filament-like plant protein 4 (FPP4), found in Arabidopsis thaliana (Mouse-ear cress).